A 141-amino-acid chain; its full sequence is Cystatin (141 aa).

The signal sequence occupies residues 1 to 26 (MLHSQLPVAAPLRLLCALLLLPSVTM). One can recognise a Cystatin domain in the interval 29–129 (GGLSPRSVTD…CRFQVWSRPW (101 aa)). The short motif at 73–77 (QVVTG) is the Secondary area of contact element. 2 disulfides stabilise this stretch: Cys-91/Cys-107 and Cys-120/Cys-140.

The protein belongs to the cystatin family. Expressed at a low level by the venom gland (at protein level).

The protein localises to the secreted. In terms of biological role, inhibits various C1 cysteine proteases including cathepsin L, papain and cathepsin B. This protein has no toxic activity and its function in the venom is unknown. It may play a role as a housekeeping or regulatory protein. The protein is Cystatin of Hoplocephalus stephensii (Stephens's banded snake).